Here is a 216-residue protein sequence, read N- to C-terminus: Thioredoxin-like 2, chloroplastic (216 aa).

The transit peptide at 1–58 (MAEALLPLPRRLVVTASTPACSSASSSTSPSPHCLLSRANPRPPRLAAPSPPRHRRLK) directs the protein to the chloroplast. Residues 19–40 (PACSSASSSTSPSPHCLLSRAN) are compositionally biased toward low complexity. The interval 19-70 (PACSSASSSTSPSPHCLLSRANPRPPRLAAPSPPRHRRLKAHAAVSDKSEQP) is disordered. A compositionally biased stretch (pro residues) spans 41–51 (PRPPRLAAPSP). Positions 61–188 (AAVSDKSEQP…LKDAIAVHNT (128 aa)) constitute a Thioredoxin domain. Active-site nucleophile residues include Cys-111 and Cys-114. Cys-111 and Cys-114 are oxidised to a cystine.

It belongs to the thioredoxin family.

The protein localises to the plastid. It is found in the chloroplast. Functionally, probable thiol-disulfide oxidoreductase that may participate in various redox reactions. This chain is Thioredoxin-like 2, chloroplastic, found in Oryza sativa subsp. japonica (Rice).